Here is a 71-residue protein sequence, read N- to C-terminus: MQVEETSIEEIQTKIKRLNSKAGQMKMDLHDLAEGLPTDYTQLMDVAAATYEIYRQLDELKQELKKLENAK.

Belongs to the UPF0437 family.

This chain is UPF0437 protein asl1434, found in Nostoc sp. (strain PCC 7120 / SAG 25.82 / UTEX 2576).